The primary structure comprises 252 residues: Protein UL24 homolog (252 aa).

The segment at 215–252 (SVLTKTSGENRSRASRQVAKNAPKNRIRRTAKKDAKRQ) is disordered. Positions 237-252 (PKNRIRRTAKKDAKRQ) are enriched in basic residues.

This sequence belongs to the herpesviridae UL24 family.

The protein resides in the virion. It localises to the host cytoplasm. It is found in the host nucleus. The protein localises to the host nucleolus. Its subcellular location is the host Golgi apparatus. May participate in nuclear egress of viral particles. Plays a role in the dispersal of several host nucleolar proteins including NCL/nucleolin and NPM1. Since deletion of host NCL/nucleolin negatively impact on nuclear egress, UL24 supposedly acts on this process through its effect on host nucleoli. The protein is Protein UL24 homolog (U49) of Homo sapiens (Human).